A 561-amino-acid polypeptide reads, in one-letter code: Serine palmitoyltransferase 2 (561 aa).

The helical transmembrane segment at proline 57 to valine 77 threads the bilayer. Lysine 366 is subject to N6-(pyridoxal phosphate)lysine. The chain crosses the membrane as a helical span at residues leucine 443–proline 463.

Belongs to the class-II pyridoxal-phosphate-dependent aminotransferase family. As to quaternary structure, LCB1 and LCB2 encode essential subunits of the enzyme and form a heterodimer. Component of the SPOTS complex, at least composed of LCB1/2 (LCB1 and/or LCB2), ORM1/2 (ORM1 and/or ORM2), SAC1 and TSC3. Interacts with LCB1 and TSC3. It depends on pyridoxal 5'-phosphate as a cofactor.

It localises to the cytoplasm. The protein resides in the endoplasmic reticulum. Its subcellular location is the membrane. The catalysed reaction is L-serine + hexadecanoyl-CoA + H(+) = 3-oxosphinganine + CO2 + CoA. It participates in lipid metabolism; sphingolipid metabolism. Catalytic subunit of serine palmitoyltransferase (SPT), which catalyzes the committed step in the synthesis of sphingolipids, the condensation of serine with palmitoyl CoA to form the long chain base 3-ketosphinganine. This is Serine palmitoyltransferase 2 (LCB2) from Saccharomyces cerevisiae (strain ATCC 204508 / S288c) (Baker's yeast).